The sequence spans 61 residues: Pleurocidin-like peptide WF3 (61 aa).

The N-terminal stretch at 1 to 22 is a signal peptide; that stretch reads MKFTATFLVLSLVVLMAEPGEC. Residues 48 to 61 constitute a propeptide that is removed on maturation; sequence YDEQQELNKRAVDE.

The protein belongs to the pleurocidin family.

It is found in the secreted. In terms of biological role, antimicrobial peptide. The chain is Pleurocidin-like peptide WF3 (ple3) from Pseudopleuronectes americanus (Winter flounder).